Here is a 249-residue protein sequence, read N- to C-terminus: 14-3-3-like protein D (249 aa).

It belongs to the 14-3-3 family.

This Nicotiana tabacum (Common tobacco) protein is 14-3-3-like protein D.